Reading from the N-terminus, the 441-residue chain is Vacuolar cation/proton exchanger 2 (441 aa).

Residues 1–69 are Cytoplasmic-facing; sequence MSCCKVPVLI…PKNSVLNSIK (69 aa). Residues 70–90 form a helical membrane-spanning segment; sequence IVIFCNKLNLLLPFGPLAILV. The Extracellular segment spans residues 91–97; that stretch reads HYMIDSK. The helical transmembrane segment at 98 to 118 threads the bilayer; sequence GWVFLLTLVGITPLAERLGYA. The Cytoplasmic portion of the chain corresponds to 119-129; sequence TEQLACYTGPT. The helical transmembrane segment at 130 to 150 threads the bilayer; sequence VGGLLNATFGNVTELIISIFA. The interval 139 to 174 is cation selection; the sequence is GNVTELIISIFALKNGMIRVVQLTLLGSILSNMLLV. The Extracellular portion of the chain corresponds to 151-166; that stretch reads LKNGMIRVVQLTLLGS. A helical membrane pass occupies residues 167 to 187; it reads ILSNMLLVLGCAFFCGGLVFY. Over 188–196 the chain is Cytoplasmic; the sequence is QKDQVFDKG. A helical transmembrane segment spans residues 197 to 217; the sequence is IATVNSGLLLMAVMGILFPAV. Over 218-231 the chain is Extracellular; sequence LHYTHSEVHAGSSE. A helical membrane pass occupies residues 232–252; it reads LALSRFSSCIMLIAYAAYLFF. Over 253 to 286 the chain is Cytoplasmic; that stretch reads QLKSQSNSYSPLDEESNQNEETSAEDEDPEISKW. The chain crosses the membrane as a helical span at residues 287–307; the sequence is EAIIWLSILTAWVSLLSGYLV. The Extracellular portion of the chain corresponds to 308–311; sequence DAIE. A helical transmembrane segment spans residues 312–332; the sequence is GASVSWNIPIAFISTILLPIV. Residues 333–354 lie on the Cytoplasmic side of the membrane; sequence GNAAEHAGAIMFAMKDKLDLSL. The cation selection stretch occupies residues 333–368; sequence GNAAEHAGAIMFAMKDKLDLSLGVAIGSSIQISMFA. A helical transmembrane segment spans residues 355 to 375; that stretch reads GVAIGSSIQISMFAVPFCVVI. At 376-384 the chain is on the extracellular side; sequence GWMMGQQMD. Residues 385–405 form a helical membrane-spanning segment; the sequence is LNFQLFETAMLFITVIVVAFF. At 406–412 the chain is on the cytoplasmic side; that stretch reads LQEGSSN. Residues 413-433 form a helical membrane-spanning segment; the sequence is YFKGLMLILCYLIVAASFFVH. Topologically, residues 434 to 441 are extracellular; that stretch reads EDPHQDGI.

Belongs to the Ca(2+):cation antiporter (CaCA) (TC 2.A.19) family. Cation/proton exchanger (CAX) subfamily.

It localises to the vacuole membrane. Its activity is regulated as follows. Inhibited by excess of Ca(2+) and Cd(2+), Mn(2+), and Zn(2+). Vacuolar cation/proton exchanger (CAX). Translocates Ca(2+) and other metal ions into vacuoles using the proton gradient formed by H(+)-ATPase and H(+)-pyrophosphatase. The sequence is that of Vacuolar cation/proton exchanger 2 (CAX2) from Arabidopsis thaliana (Mouse-ear cress).